We begin with the raw amino-acid sequence, 404 residues long: Cysteine desulfurase IscS (404 aa).

Pyridoxal 5'-phosphate contacts are provided by residues 75-76 (AT), asparagine 155, glutamine 183, and 203-205 (SGH). N6-(pyridoxal phosphate)lysine is present on lysine 206. Threonine 243 contributes to the pyridoxal 5'-phosphate binding site. The Cysteine persulfide intermediate role is filled by cysteine 328. Cysteine 328 contacts [2Fe-2S] cluster.

This sequence belongs to the class-V pyridoxal-phosphate-dependent aminotransferase family. NifS/IscS subfamily. In terms of assembly, homodimer. Forms a heterotetramer with IscU, interacts with other sulfur acceptors. Pyridoxal 5'-phosphate serves as cofactor.

Its subcellular location is the cytoplasm. It catalyses the reaction (sulfur carrier)-H + L-cysteine = (sulfur carrier)-SH + L-alanine. Its pathway is cofactor biosynthesis; iron-sulfur cluster biosynthesis. In terms of biological role, master enzyme that delivers sulfur to a number of partners involved in Fe-S cluster assembly, tRNA modification or cofactor biosynthesis. Catalyzes the removal of elemental sulfur atoms from cysteine to produce alanine. Functions as a sulfur delivery protein for Fe-S cluster synthesis onto IscU, an Fe-S scaffold assembly protein, as well as other S acceptor proteins. The polypeptide is Cysteine desulfurase IscS (Klebsiella pneumoniae (strain 342)).